Reading from the N-terminus, the 188-residue chain is Ribosome-recycling factor (188 aa).

Belongs to the RRF family.

Its subcellular location is the cytoplasm. Functionally, responsible for the release of ribosomes from messenger RNA at the termination of protein biosynthesis. May increase the efficiency of translation by recycling ribosomes from one round of translation to another. This Gluconobacter oxydans (strain 621H) (Gluconobacter suboxydans) protein is Ribosome-recycling factor.